The chain runs to 209 residues: MSRNGLGPVAGVDEAGRGACCGPISIAACILPDKPIQELAALTDSKNLSASTREKLMPLIKKHALAWSVIVISAQDIDRFGIQHANISGMRRAVAALDTQPGYVLTDAMKVPGFTVPYLPIIGGDASARCIAAASVLAKQTRDDIMTDMANDYPHYGLEIHKGYSTKIHMDAVRHHGASPEHRYSYANVAKAHQEWLHAADNDTTEGGA.

Positions glycine 7–histidine 198 constitute an RNase H type-2 domain. A divalent metal cation-binding residues include aspartate 13, glutamate 14, and aspartate 107.

This sequence belongs to the RNase HII family. Mn(2+) serves as cofactor. Requires Mg(2+) as cofactor.

The protein resides in the cytoplasm. It catalyses the reaction Endonucleolytic cleavage to 5'-phosphomonoester.. In terms of biological role, endonuclease that specifically degrades the RNA of RNA-DNA hybrids. The protein is Ribonuclease HII of Corynebacterium glutamicum (strain R).